The following is a 206-amino-acid chain: Imidazoleglycerol-phosphate dehydratase (206 aa).

The protein belongs to the imidazoleglycerol-phosphate dehydratase family.

It is found in the cytoplasm. It carries out the reaction D-erythro-1-(imidazol-4-yl)glycerol 3-phosphate = 3-(imidazol-4-yl)-2-oxopropyl phosphate + H2O. Its pathway is amino-acid biosynthesis; L-histidine biosynthesis; L-histidine from 5-phospho-alpha-D-ribose 1-diphosphate: step 6/9. The sequence is that of Imidazoleglycerol-phosphate dehydratase from Leptospira borgpetersenii serovar Hardjo-bovis (strain JB197).